Consider the following 430-residue polypeptide: Serine hydroxymethyltransferase (430 aa).

(6S)-5,6,7,8-tetrahydrofolate is bound by residues Leu-126 and 130-132; that span reads GHL. An N6-(pyridoxal phosphate)lysine modification is found at Lys-235.

It belongs to the SHMT family. In terms of assembly, homodimer. The cofactor is pyridoxal 5'-phosphate.

The protein resides in the cytoplasm. The catalysed reaction is (6R)-5,10-methylene-5,6,7,8-tetrahydrofolate + glycine + H2O = (6S)-5,6,7,8-tetrahydrofolate + L-serine. It participates in one-carbon metabolism; tetrahydrofolate interconversion. The protein operates within amino-acid biosynthesis; glycine biosynthesis; glycine from L-serine: step 1/1. In terms of biological role, catalyzes the reversible interconversion of serine and glycine with tetrahydrofolate (THF) serving as the one-carbon carrier. This reaction serves as the major source of one-carbon groups required for the biosynthesis of purines, thymidylate, methionine, and other important biomolecules. Also exhibits THF-independent aldolase activity toward beta-hydroxyamino acids, producing glycine and aldehydes, via a retro-aldol mechanism. The protein is Serine hydroxymethyltransferase of Leifsonia xyli subsp. xyli (strain CTCB07).